A 171-amino-acid polypeptide reads, in one-letter code: uncharacterized protein (171 aa).

A signal peptide spans 1–17; the sequence is MLKRIIWILFLLGLTWG.

Part of the elfADCG-ycbUVF fimbrial operon, which promotes adhesion of bacteria to different abiotic surfaces. This is an uncharacterized protein from Escherichia coli (strain K12).